The chain runs to 455 residues: Bifunctional protein GlmU (455 aa).

The segment at 1-226 is pyrophosphorylase; the sequence is MALNVVILAA…AIEVEGANNR (226 aa). UDP-N-acetyl-alpha-D-glucosamine-binding positions include 8-11, lysine 22, glutamine 73, 78-79, 100-102, glycine 137, glutamate 151, asparagine 166, and asparagine 224; these read LAAG, GT, and YGD. Aspartate 102 is a binding site for Mg(2+). Mg(2+) is bound at residue asparagine 224. The tract at residues 227–247 is linker; it reads VQLAQLERAYQARAAEKLMLE. Positions 248–455 are N-acetyltransferase; sequence GANLRDPARL…WARPVKKPKS (208 aa). UDP-N-acetyl-alpha-D-glucosamine contacts are provided by arginine 330 and lysine 348. Histidine 360 functions as the Proton acceptor in the catalytic mechanism. UDP-N-acetyl-alpha-D-glucosamine is bound by residues tyrosine 363 and asparagine 374. Residues alanine 377, 383–384, serine 402, alanine 420, and arginine 437 contribute to the acetyl-CoA site; that span reads NY.

It in the N-terminal section; belongs to the N-acetylglucosamine-1-phosphate uridyltransferase family. The protein in the C-terminal section; belongs to the transferase hexapeptide repeat family. Homotrimer. Requires Mg(2+) as cofactor.

The protein localises to the cytoplasm. It carries out the reaction alpha-D-glucosamine 1-phosphate + acetyl-CoA = N-acetyl-alpha-D-glucosamine 1-phosphate + CoA + H(+). The enzyme catalyses N-acetyl-alpha-D-glucosamine 1-phosphate + UTP + H(+) = UDP-N-acetyl-alpha-D-glucosamine + diphosphate. The protein operates within nucleotide-sugar biosynthesis; UDP-N-acetyl-alpha-D-glucosamine biosynthesis; N-acetyl-alpha-D-glucosamine 1-phosphate from alpha-D-glucosamine 6-phosphate (route II): step 2/2. It functions in the pathway nucleotide-sugar biosynthesis; UDP-N-acetyl-alpha-D-glucosamine biosynthesis; UDP-N-acetyl-alpha-D-glucosamine from N-acetyl-alpha-D-glucosamine 1-phosphate: step 1/1. Its pathway is bacterial outer membrane biogenesis; LPS lipid A biosynthesis. Its function is as follows. Catalyzes the last two sequential reactions in the de novo biosynthetic pathway for UDP-N-acetylglucosamine (UDP-GlcNAc). The C-terminal domain catalyzes the transfer of acetyl group from acetyl coenzyme A to glucosamine-1-phosphate (GlcN-1-P) to produce N-acetylglucosamine-1-phosphate (GlcNAc-1-P), which is converted into UDP-GlcNAc by the transfer of uridine 5-monophosphate (from uridine 5-triphosphate), a reaction catalyzed by the N-terminal domain. In Shewanella sediminis (strain HAW-EB3), this protein is Bifunctional protein GlmU.